The sequence spans 318 residues: Ethylene-responsive transcription factor FZP (318 aa).

The segment covering 1–15 (MNTRGSGSSSSSSSS) has biased composition (low complexity). 2 disordered regions span residues 1-59 (MNTR…GRFL) and 158-178 (SYGH…SGAS). Pro residues predominate over residues 25-37 (PPKPASQPSPPSS). Residues 57–114 (RFLGVRRRPWGRYAAEIRDPTTKERHWLGTFDTAQEAALAYDRAALSMKGAQARTNFV) constitute a DNA-binding region (AP2/ERF). Positions 160 to 171 (GHHHHHHHHHGH) are enriched in basic residues.

It belongs to the AP2/ERF transcription factor family. ERF subfamily.

The protein localises to the nucleus. Functionally, required to prevent the formation of axillary meristems within the spikelet meristem and permit the subsequent establishment of floral meristem identity. Mediates the transition from spikelet to floret meristem. Determines the transition from panicle branching to spikelet formation. May specify floral organ identity by regulating the class B genes (Agamous-like genes) MADS6 and MADS17, as well as class E genes MADS1, MADS7 and MADS8 in floral meristem. Possesses transactivation activity. The polypeptide is Ethylene-responsive transcription factor FZP (Oryza sativa subsp. japonica (Rice)).